We begin with the raw amino-acid sequence, 192 residues long: uncharacterized protein (192 aa).

An N-terminal signal peptide occupies residues 1–17 (MFLHLILLAGLAPVVYL).

This is an uncharacterized protein from Caenorhabditis elegans.